Here is a 327-residue protein sequence, read N- to C-terminus: Glycerol-3-phosphate dehydrogenase [NAD(P)+] (327 aa).

NADPH-binding residues include serine 10, phenylalanine 11, arginine 31, and lysine 108. 3 residues coordinate sn-glycerol 3-phosphate: lysine 108, glycine 136, and serine 138. Residue alanine 140 coordinates NADPH. Sn-glycerol 3-phosphate is bound by residues lysine 191, aspartate 246, serine 256, arginine 257, and asparagine 258. The active-site Proton acceptor is the lysine 191. An NADPH-binding site is contributed by arginine 257. Leucine 281 and glutamate 283 together coordinate NADPH.

The protein belongs to the NAD-dependent glycerol-3-phosphate dehydrogenase family.

The protein localises to the cytoplasm. The enzyme catalyses sn-glycerol 3-phosphate + NAD(+) = dihydroxyacetone phosphate + NADH + H(+). The catalysed reaction is sn-glycerol 3-phosphate + NADP(+) = dihydroxyacetone phosphate + NADPH + H(+). The protein operates within membrane lipid metabolism; glycerophospholipid metabolism. In terms of biological role, catalyzes the reduction of the glycolytic intermediate dihydroxyacetone phosphate (DHAP) to sn-glycerol 3-phosphate (G3P), the key precursor for phospholipid synthesis. This Ehrlichia ruminantium (strain Gardel) protein is Glycerol-3-phosphate dehydrogenase [NAD(P)+].